A 152-amino-acid polypeptide reads, in one-letter code: CASP-like protein 5C3 (152 aa).

Topologically, residues 1 to 17 (MVEVPGSVGTTASLSLR) are cytoplasmic. Residues 18-38 (LGQMVLAFGSLLFMTIGVRFY) form a helical membrane-spanning segment. Over 39-42 (QFTA) the chain is Extracellular. Residues 43-63 (FCYLVTIMSLAIPWNLTLAMV) traverse the membrane as a helical segment. Topologically, residues 64–78 (DIYCVILQQPFQKPR) are cytoplasmic. The helical transmembrane segment at 79-99 (ILLAISIGDWVVSVLALASAS) threads the bilayer. Residues 100-128 (SAASVVDILRSNESSCPPTICNRYQFAAT) lie on the Extracellular side of the membrane. A glycan (N-linked (GlcNAc...) asparagine) is linked at asparagine 111. The chain crosses the membrane as a helical span at residues 129–149 (LAFLTWFLSLSSSLFNLWLLP). At 150–152 (SLI) the chain is on the cytoplasmic side.

It belongs to the Casparian strip membrane proteins (CASP) family. Homodimer and heterodimers. As to expression, expressed in the floral organ abscission zone and flower buds.

It is found in the cell membrane. This Arabidopsis thaliana (Mouse-ear cress) protein is CASP-like protein 5C3.